The chain runs to 310 residues: Oxygen-dependent coproporphyrinogen-III oxidase (310 aa).

Serine 92 contributes to the substrate binding site. A divalent metal cation is bound by residues histidine 96 and histidine 106. Histidine 106 acts as the Proton donor in catalysis. A substrate-binding site is contributed by 108-110 (NVR). Residues histidine 145 and histidine 175 each coordinate a divalent metal cation. The interval 240 to 275 (YVEFNLIWDRGTLFGLQSGGRTESILMSMPPLARWE) is important for dimerization. 258–260 (GGR) is a substrate binding site.

The protein belongs to the aerobic coproporphyrinogen-III oxidase family. Homodimer. Requires a divalent metal cation as cofactor.

It is found in the cytoplasm. The enzyme catalyses coproporphyrinogen III + O2 + 2 H(+) = protoporphyrinogen IX + 2 CO2 + 2 H2O. The protein operates within porphyrin-containing compound metabolism; protoporphyrin-IX biosynthesis; protoporphyrinogen-IX from coproporphyrinogen-III (O2 route): step 1/1. Functionally, involved in the heme biosynthesis. Catalyzes the aerobic oxidative decarboxylation of propionate groups of rings A and B of coproporphyrinogen-III to yield the vinyl groups in protoporphyrinogen-IX. This chain is Oxygen-dependent coproporphyrinogen-III oxidase, found in Pectobacterium atrosepticum (strain SCRI 1043 / ATCC BAA-672) (Erwinia carotovora subsp. atroseptica).